Reading from the N-terminus, the 608-residue chain is Aspartate--tRNA(Asp/Asn) ligase (608 aa).

Glu-175 serves as a coordination point for L-aspartate. Positions 199–202 (QLFK) are aspartate. An L-aspartate-binding site is contributed by Arg-221. ATP contacts are provided by residues 221-223 (RDE) and Gln-230. An L-aspartate-binding site is contributed by His-453. Glu-487 contacts ATP. Position 494 (Arg-494) interacts with L-aspartate. 539–542 (GWDR) serves as a coordination point for ATP. Residues 566–608 (IDPLTDAPAAITPQQRKEAGIDAKPKPKAEAQAEAQAEESAEK) form a disordered region. Residues 580–596 (QRKEAGIDAKPKPKAEA) are compositionally biased toward basic and acidic residues.

It belongs to the class-II aminoacyl-tRNA synthetase family. Type 1 subfamily. As to quaternary structure, homodimer.

The protein resides in the cytoplasm. It carries out the reaction tRNA(Asx) + L-aspartate + ATP = L-aspartyl-tRNA(Asx) + AMP + diphosphate. In terms of biological role, aspartyl-tRNA synthetase with relaxed tRNA specificity since it is able to aspartylate not only its cognate tRNA(Asp) but also tRNA(Asn). Reaction proceeds in two steps: L-aspartate is first activated by ATP to form Asp-AMP and then transferred to the acceptor end of tRNA(Asp/Asn). This is Aspartate--tRNA(Asp/Asn) ligase from Corynebacterium glutamicum (strain R).